The primary structure comprises 177 residues: Large ribosomal subunit protein uL6 (177 aa).

Belongs to the universal ribosomal protein uL6 family. In terms of assembly, part of the 50S ribosomal subunit.

In terms of biological role, this protein binds to the 23S rRNA, and is important in its secondary structure. It is located near the subunit interface in the base of the L7/L12 stalk, and near the tRNA binding site of the peptidyltransferase center. The protein is Large ribosomal subunit protein uL6 of Brucella canis (strain ATCC 23365 / NCTC 10854 / RM-666).